Here is a 196-residue protein sequence, read N- to C-terminus: ATP-dependent Clp protease proteolytic subunit (196 aa).

Ser99 serves as the catalytic Nucleophile. Residue His124 is part of the active site.

The protein belongs to the peptidase S14 family. In terms of assembly, fourteen ClpP subunits assemble into 2 heptameric rings which stack back to back to give a disk-like structure with a central cavity, resembling the structure of eukaryotic proteasomes.

It is found in the cytoplasm. The enzyme catalyses Hydrolysis of proteins to small peptides in the presence of ATP and magnesium. alpha-casein is the usual test substrate. In the absence of ATP, only oligopeptides shorter than five residues are hydrolyzed (such as succinyl-Leu-Tyr-|-NHMec, and Leu-Tyr-Leu-|-Tyr-Trp, in which cleavage of the -Tyr-|-Leu- and -Tyr-|-Trp bonds also occurs).. Its function is as follows. Cleaves peptides in various proteins in a process that requires ATP hydrolysis. Has a chymotrypsin-like activity. Plays a major role in the degradation of misfolded proteins. The chain is ATP-dependent Clp protease proteolytic subunit from Helicobacter pylori (strain ATCC 700392 / 26695) (Campylobacter pylori).